Here is a 229-residue protein sequence, read N- to C-terminus: Small ribosomal subunit protein uS2c (229 aa).

The protein belongs to the universal ribosomal protein uS2 family.

The protein resides in the plastid. It localises to the chloroplast. The protein is Small ribosomal subunit protein uS2c (rps2) of Trieres chinensis (Marine centric diatom).